Here is a 301-residue protein sequence, read N- to C-terminus: GTPase Era (301 aa).

Residues 7–175 (YCGFIAIVGR…AGIVRKHLPE (169 aa)) form the Era-type G domain. The tract at residues 15-22 (GRPNVGKS) is G1. 15 to 22 (GRPNVGKS) provides a ligand contact to GTP. Residues 41-45 (QTTRH) form a G2 region. The interval 62–65 (DTPG) is G3. GTP-binding positions include 62 to 66 (DTPGL) and 124 to 127 (NKVD). Residues 124 to 127 (NKVD) are G4. The G5 stretch occupies residues 154 to 156 (ISA). The KH type-2 domain occupies 206-283 (LGAELPYSVT…HLELWVKVKS (78 aa)).

It belongs to the TRAFAC class TrmE-Era-EngA-EngB-Septin-like GTPase superfamily. Era GTPase family. Monomer.

It is found in the cytoplasm. Its subcellular location is the cell inner membrane. Functionally, an essential GTPase that binds both GDP and GTP, with rapid nucleotide exchange. Plays a role in 16S rRNA processing and 30S ribosomal subunit biogenesis and possibly also in cell cycle regulation and energy metabolism. The chain is GTPase Era from Salmonella heidelberg (strain SL476).